The following is a 306-amino-acid chain: Heterogeneous nuclear ribonucleoproteins C1/C2 (306 aa).

A2 bears the N-acetylalanine mark. Glycyl lysine isopeptide (Lys-Gly) (interchain with G-Cter in SUMO2) cross-links involve residues K8, K50, K89, and K94. The RRM domain occupies 16 to 87 (SRVFIGNLNT…QVLDINLAAE (72 aa)). Phosphoserine is present on residues S107 and V108. Residue T109 is modified to Phosphothreonine. Phosphoserine is present on residues S113, S115, and S121. 2 disordered regions span residues 139–190 (YPAR…KLKG) and 221–306 (QSKQ…EDDS). A Nuclear localization signal motif is present at residues 155–161 (PSKRQRV). Phosphoserine occurs at positions 162 and 166. Residues 175–185 (SKSGQRGSSKS) are compositionally biased toward low complexity. K176 bears the N6-acetyllysine; alternate mark. K176 participates in a covalent cross-link: Glycyl lysine isopeptide (Lys-Gly) (interchain with G-Cter in SUMO2); alternate. A coiled-coil region spans residues 190–238 (GDDLQAIKKELTQIKQKVDSLLENLEKIEKEQSKQAVEMKNDKSEEEQS). Residues 221 to 232 (QSKQAVEMKNDK) show a composition bias toward basic and acidic residues. Residues K223 and K229 each participate in a glycyl lysine isopeptide (Lys-Gly) (interchain with G-Cter in SUMO2) cross-link. A Glycyl lysine isopeptide (Lys-Gly) (interchain with G-Cter in SUMO2); alternate cross-link involves residue K232. K232 is covalently cross-linked (Glycyl lysine isopeptide (Lys-Gly) (interchain with G-Cter in SUMO1); alternate). Phosphoserine is present on residues S233, S238, S239, and S241. Residues 242–253 (VKKDETNVKMES) show a composition bias toward basic and acidic residues. Residues K243 and K244 each participate in a glycyl lysine isopeptide (Lys-Gly) (interchain with G-Cter in SUMO2) cross-link. A Glycyl lysine isopeptide (Lys-Gly) (interchain with G-Cter in SUMO2); alternate cross-link involves residue K250. A Glycyl lysine isopeptide (Lys-Gly) (interchain with G-Cter in SUMO); alternate cross-link involves residue K250. Phosphoserine occurs at positions 253 and 260. Positions 255-276 (GGADDSAEEGDLLDDDDNEDRG) are enriched in acidic residues. Basic and acidic residues predominate over residues 277-287 (DDQLELIKDDE). Acidic residues predominate over residues 288–306 (KEAEEGEDDRDSANGEDDS). S299 and S306 each carry phosphoserine.

The protein belongs to the RRM HNRPC family. RALY subfamily. Tetramer composed of 3 copies of isoform C1 and 1 copy of isoform C2. Assembly of 3 tetramers with bound pre-mRNA gives rise to a 19S complex that interacts with HNRNPA2B1 tetramers. Component of the 40S hnRNP particle. Identified in the spliceosome C complex. Interacts with IGF2BP1. Interacts with DHX9; this interaction is direct, enhanced probably by their concomitant binding to RNA and mediates the attachment to actin filaments. Interacts with PPIA/CYPA. Interacts with YWHAE. In terms of processing, phosphorylated on Ser-260 and Ser-299 in resting cells. Phosphorylated on Ser-253 and on 1 serine residue in the poly-Ser stretch at position 238 in response to hydrogen peroxide. Sumoylated. Sumoylation reduces affinity for mRNA. Post-translationally, ubiquitinated and degraded after nucleo-cytoplasmic transport by YWHAE.

The protein resides in the nucleus. Binds pre-mRNA and nucleates the assembly of 40S hnRNP particles. Interacts with poly-U tracts in the 3'-UTR or 5'-UTR of mRNA and modulates the stability and the level of translation of bound mRNA molecules. Single HNRNPC tetramers bind 230-240 nucleotides. Trimers of HNRNPC tetramers bind 700 nucleotides. May play a role in the early steps of spliceosome assembly and pre-mRNA splicing. N6-methyladenosine (m6A) has been shown to alter the local structure in mRNAs and long non-coding RNAs (lncRNAs) via a mechanism named 'm(6)A-switch', facilitating binding of HNRNPC, leading to regulation of mRNA splicing. This chain is Heterogeneous nuclear ribonucleoproteins C1/C2 (HNRNPC), found in Homo sapiens (Human).